A 616-amino-acid polypeptide reads, in one-letter code: Hemagglutinin-neuraminidase (616 aa).

At 1 to 26 (MDRAVSQVALENDEREAKNTWRLVFR) the chain is on the intravirion side. The chain crosses the membrane as a helical span at residues 27 to 47 (IAILLSTVVTLAISAAALAYS). The Virion surface portion of the chain corresponds to 48–616 (MEASTPSDLV…ELESYAASWP (569 aa)). N-linked (GlcNAc...) asparagine; by host glycosylation is present at asparagine 119. Residues 124–152 (GAPIHDPDYIGGIGKELIVDDASDVTSYY) are important for interaction with fusion/F protein. 3 disulfides stabilise this stretch: cysteine 172–cysteine 196, cysteine 186–cysteine 247, and cysteine 238–cysteine 251. Residues 234–239 (NRKSCS) form an involved in neuraminidase activity region. 2 N-linked (GlcNAc...) asparagine; by host glycosylation sites follow: asparagine 341 and asparagine 433. 2 disulfides stabilise this stretch: cysteine 344/cysteine 461 and cysteine 455/cysteine 465. N-linked (GlcNAc...) asparagine; by host glycosylation is found at asparagine 481, asparagine 538, and asparagine 600. An intrachain disulfide couples cysteine 531 to cysteine 542.

This sequence belongs to the paramyxoviruses hemagglutinin-neuraminidase family. In terms of assembly, homotetramer; composed of disulfide-linked homodimers. Interacts with F protein trimer. Interacts with host CG-1B; this interaction inhibits viral adsorption and replication rather than internalization.

The protein localises to the virion membrane. It localises to the host cell membrane. It catalyses the reaction Hydrolysis of alpha-(2-&gt;3)-, alpha-(2-&gt;6)-, alpha-(2-&gt;8)- glycosidic linkages of terminal sialic acid residues in oligosaccharides, glycoproteins, glycolipids, colominic acid and synthetic substrates.. Functionally, mediates the viral entry into the host cell together with fusion/F protein. Attaches the virus to sialic acid-containing cell receptors and thereby initiates infection. Binding of HN protein to the receptor induces a conformational change that allows the F protein to trigger virion/cell membranes fusion. In terms of biological role, neuraminidase activity ensures the efficient spread of the virus by dissociating the mature virions from the neuraminic acid containing glycoproteins. The sequence is that of Hemagglutinin-neuraminidase (HN) from Newcastle disease virus (strain Queensland/66) (NDV).